Reading from the N-terminus, the 248-residue chain is Probable transcriptional regulatory protein R02753 (248 aa).

The protein belongs to the TACO1 family.

The protein resides in the cytoplasm. The protein is Probable transcriptional regulatory protein R02753 of Rhizobium meliloti (strain 1021) (Ensifer meliloti).